A 426-amino-acid chain; its full sequence is Elongation factor Tu, mitochondrial (426 aa).

A mitochondrion-targeting transit peptide spans 1–27 (MFKNLAGSFRAVSRVAFKTRPSLVRSY). One can recognise a tr-type G domain in the interval 34 to 230 (KPHVNIGTIG…AVDEHIPTPT (197 aa)). The G1 stretch occupies residues 43–50 (GHVDHGKT). 43 to 50 (GHVDHGKT) lines the GTP pocket. Residues 84 to 88 (GITIS) form a G2 region. The interval 105-108 (DCPG) is G3. GTP is bound by residues 105–109 (DCPGH) and 160–163 (NKVD). The segment at 160 to 163 (NKVD) is G4. A G5 region spans residues 198–200 (SAL).

Belongs to the TRAFAC class translation factor GTPase superfamily. Classic translation factor GTPase family. EF-Tu/EF-1A subfamily.

The protein resides in the mitochondrion. Its pathway is protein biosynthesis; polypeptide chain elongation. Functionally, G-protein that, in its active GTP-bound form, binds to and delivers aminoacyl-tRNA to the A-site of ribosomes during protein biosynthesis. In the presence of a correct codon-anticodon match between the aminoacyl-tRNA and the A-site codon of the ribosome-bound mRNA, the ribosome acts as a GTPase activator and the GTP is hydrolyzed. The inactive GDP-bound form leaves the ribosome and must be recycled before binding another molecule of aminoacyl-tRNA. Required for mitochondrial protein biosynthesis and maintenance of mitochondrial DNA. The chain is Elongation factor Tu, mitochondrial (TUF1) from Meyerozyma guilliermondii (strain ATCC 6260 / CBS 566 / DSM 6381 / JCM 1539 / NBRC 10279 / NRRL Y-324) (Yeast).